The chain runs to 413 residues: MQRANHTRPVLIIGAGLSGLAIGRLLTNNGIANIVFEASPPERSQGFAISLHDWGYSLLLEALGGLSLRAMTKAVAPDRFIGGTGWVDLIMRDNTTGKVLVEPDVDARPAVIRANRNSLRAWMADCGDDELDVRYGHRLKSISGSVGNVQAVFENGAEYRGSIVIAADGVHSAVRSQVLPHIVPEVLPVVVYHGEFQVSHDEYDRCVRPVIGTANILAGVGDGFNTPITVCNITKTQVHLDWSYSRPARGENDPLFSTKTPEDQTRDLPQALLEELASRQLAEPWAKYINPETIQQHSVFRWISRCVYMPTADALHAAQAGVVFIGDAWHAMPIFGGEGGNHALVDSVELAAAMVKEANVERAVAVYYEGAARRCQEAVRRSRSRFYVLHRPMAEWRDIAEKRRAKAALEQKH.

An N-terminal signal peptide occupies residues 1-23 (MQRANHTRPVLIIGAGLSGLAIG). Asparagine 5 carries N-linked (GlcNAc...) asparagine glycosylation. Residues glutamate 37 and alanine 48 each contribute to the FAD site. Asparagine 94 carries an N-linked (GlcNAc...) asparagine glycan. Arginine 120 provides a ligand contact to FAD. The N-linked (GlcNAc...) asparagine glycan is linked to asparagine 232. 2 residues coordinate FAD: aspartate 327 and glycine 340.

The protein belongs to the paxM FAD-dependent monooxygenase family. FAD serves as cofactor.

It functions in the pathway secondary metabolite biosynthesis; terpenoid biosynthesis. Functionally, FAD-dependent monooxygenase; part of the gene cluster that mediates the biosynthesis of viridicatumtoxin, a tetracycline-like fungal meroterpenoid with a unique, fused spirobicyclic ring system. The first step of the pathway is the production of the malonamoyl-CoA starter unit for the polyketide synthase vrtA. The aldolase vrtJ may be involved in the synthesis of the malonamate substrate for malonamoyl-CoA synthetase vrtB. The polyketide synthase vrtA then may utilize the malonamoyl-CoA starter unit, followed by sequential condensation of eight malonyl-CoA units to form the polyketide backbone. The cyclization of the last ring could be mediated by the lactamase-like protein vrtG. The proposed post-PKS tailoring steps are a hydroxylation at C5 catalyzed the cytochrome P450 monooxygenase vrtE, a hydroxylation at C12a catalyzed by VrtH and/or VrtI, and an O-methylation by the O-methyltransferase vrtF. VrtC is then proposed to catalyze the transfer of a geranyl group synthesized by vrtD to the aromatic C ring of the tetracyclic polyketide intermediate of viridicatumtoxin to yield previridicatumtoxin. Finally, the cytochrome P450 monooxygenase vrtK catalyzes the spirocyclization of the geranyl moiety of previridicatumtoxin to afford viridicatumtoxin. This is FAD-dependent monooxygenase vrtH from Penicillium aethiopicum.